Reading from the N-terminus, the 845-residue chain is Putative DEAD-box ATP-dependent RNA helicase 29 (845 aa).

The Q motif motif lies at 28-56; sequence GGFESLNLGPNVFNAIKKKGYKVPTPIQR. Residues 59-232 enclose the Helicase ATP-binding domain; that stretch reads MPLILSGVDV…KAGLREPQLV (174 aa). Position 72–79 (72–79) interacts with ATP; the sequence is ARTGSGKT. The short motif at 180 to 183 is the DEAD box element; the sequence is DEAD. The Helicase C-terminal domain maps to 256-411; it reads KYSALLYLVR…EVLKNMEEVM (156 aa). Residues 675-845 are disordered; sequence SGKIKTESGA…GGGGKRGRGR (171 aa). 2 stretches are compositionally biased toward basic and acidic residues: residues 696 to 716 and 738 to 754; these read RWQE…DETT and VRSE…ERQQ. Gly residues predominate over residues 770-799; sequence GGRGGARGGRGGGARGGRGGSRDFGGGGRD. Basic and acidic residues predominate over residues 806–817; that stretch reads RGGRSGGRDFGG. Residues 828–845 show a composition bias toward basic residues; sequence GGKRGGGRGGGGKRGRGR.

This sequence belongs to the DEAD box helicase family. DDX54/DBP10 subfamily.

The catalysed reaction is ATP + H2O = ADP + phosphate + H(+). The chain is Putative DEAD-box ATP-dependent RNA helicase 29 (RH29) from Arabidopsis thaliana (Mouse-ear cress).